The following is a 512-amino-acid chain: 2,3-bisphosphoglycerate-independent phosphoglycerate mutase (512 aa).

2 residues coordinate Mn(2+): D12 and S62. The active-site Phosphoserine intermediate is the S62. Residues H123, 153-154 (RD), R185, R191, 260-263 (RPDR), and K333 contribute to the substrate site. Positions 400, 404, 441, 442, and 460 each coordinate Mn(2+).

This sequence belongs to the BPG-independent phosphoglycerate mutase family. Monomer. It depends on Mn(2+) as a cofactor.

It carries out the reaction (2R)-2-phosphoglycerate = (2R)-3-phosphoglycerate. It participates in carbohydrate degradation; glycolysis; pyruvate from D-glyceraldehyde 3-phosphate: step 3/5. In terms of biological role, catalyzes the interconversion of 2-phosphoglycerate and 3-phosphoglycerate. This is 2,3-bisphosphoglycerate-independent phosphoglycerate mutase from Clostridium perfringens (strain SM101 / Type A).